We begin with the raw amino-acid sequence, 318 residues long: Protein FdhE homolog (318 aa).

It belongs to the FdhE family.

The protein resides in the cytoplasm. Its function is as follows. Necessary for formate dehydrogenase activity. This chain is Protein FdhE homolog, found in Pseudomonas putida (strain ATCC 47054 / DSM 6125 / CFBP 8728 / NCIMB 11950 / KT2440).